We begin with the raw amino-acid sequence, 827 residues long: Penicillin-binding protein 1A (827 aa).

Residues 1 to 18 (MGKKKKKRKSSAFKIILN) lie on the Cytoplasmic side of the membrane. A helical; Signal-anchor for type II membrane protein membrane pass occupies residues 19-39 (VFLSIFLVAGVAFGGIVFAMI). Residues 40–827 (KTAPPLNVQQ…QNHEDNKNKQ (788 aa)) are Extracellular-facing. Residues 57–229 (SILYDDKGQY…PSVYYPYSSA (173 aa)) form a transglycosylase region. Glu96 serves as the catalytic Proton donor; for transglycosylase activity. The interval 357–641 (ASAVIMDYHN…AARLWGDIMK (285 aa)) is transpeptidase. Ser398 (acyl-ester intermediate; for transpeptidase activity) is an active-site residue. The segment at 755–827 (GSLPPTEEKN…QNHEDNKNKQ (73 aa)) is disordered. The span at 760–790 (TEEKNNSNTRDKNKDKNKDKDKNKNKDKNPS) shows a compositional bias: basic and acidic residues. Residues 791–817 (QDKPNNNNNNNNNDNNNNTKPPENDSN) are compositionally biased toward low complexity. The segment covering 818 to 827 (QNHEDNKNKQ) has biased composition (basic and acidic residues).

The protein in the N-terminal section; belongs to the glycosyltransferase 51 family. This sequence in the C-terminal section; belongs to the transpeptidase family.

It localises to the cell membrane. The catalysed reaction is [GlcNAc-(1-&gt;4)-Mur2Ac(oyl-L-Ala-gamma-D-Glu-L-Lys-D-Ala-D-Ala)](n)-di-trans,octa-cis-undecaprenyl diphosphate + beta-D-GlcNAc-(1-&gt;4)-Mur2Ac(oyl-L-Ala-gamma-D-Glu-L-Lys-D-Ala-D-Ala)-di-trans,octa-cis-undecaprenyl diphosphate = [GlcNAc-(1-&gt;4)-Mur2Ac(oyl-L-Ala-gamma-D-Glu-L-Lys-D-Ala-D-Ala)](n+1)-di-trans,octa-cis-undecaprenyl diphosphate + di-trans,octa-cis-undecaprenyl diphosphate + H(+). The enzyme catalyses Preferential cleavage: (Ac)2-L-Lys-D-Ala-|-D-Ala. Also transpeptidation of peptidyl-alanyl moieties that are N-acyl substituents of D-alanine.. The protein operates within cell wall biogenesis; peptidoglycan biosynthesis. Cell wall formation. Synthesis of cross-linked peptidoglycan from the lipid intermediates. The enzyme has a penicillin-insensitive transglycosylase N-terminal domain (formation of linear glycan strands) and a penicillin-sensitive transpeptidase C-terminal domain (cross-linking of the peptide subunits). This chain is Penicillin-binding protein 1A (pbpA), found in Clostridium botulinum (strain Langeland / NCTC 10281 / Type F).